An 808-amino-acid polypeptide reads, in one-letter code: Glycerol-3-phosphate acyltransferase (808 aa).

The HXXXXD motif motif lies at 306–311 (HRSHMD).

The protein belongs to the GPAT/DAPAT family.

The protein resides in the cell inner membrane. The enzyme catalyses sn-glycerol 3-phosphate + an acyl-CoA = a 1-acyl-sn-glycero-3-phosphate + CoA. The protein operates within phospholipid metabolism; CDP-diacylglycerol biosynthesis; CDP-diacylglycerol from sn-glycerol 3-phosphate: step 1/3. In Vibrio parahaemolyticus serotype O3:K6 (strain RIMD 2210633), this protein is Glycerol-3-phosphate acyltransferase.